The sequence spans 298 residues: ATP synthase gamma chain (298 aa).

The protein belongs to the ATPase gamma chain family. As to quaternary structure, F-type ATPases have 2 components, CF(1) - the catalytic core - and CF(0) - the membrane proton channel. CF(1) has five subunits: alpha(3), beta(3), gamma(1), delta(1), epsilon(1). CF(0) has three main subunits: a, b and c.

It localises to the cell inner membrane. Its function is as follows. Produces ATP from ADP in the presence of a proton gradient across the membrane. The gamma chain is believed to be important in regulating ATPase activity and the flow of protons through the CF(0) complex. The chain is ATP synthase gamma chain from Bacteroides thetaiotaomicron (strain ATCC 29148 / DSM 2079 / JCM 5827 / CCUG 10774 / NCTC 10582 / VPI-5482 / E50).